A 185-amino-acid chain; its full sequence is Probable nicotinate-nucleotide adenylyltransferase (185 aa).

Belongs to the NadD family.

The enzyme catalyses nicotinate beta-D-ribonucleotide + ATP + H(+) = deamido-NAD(+) + diphosphate. The protein operates within cofactor biosynthesis; NAD(+) biosynthesis; deamido-NAD(+) from nicotinate D-ribonucleotide: step 1/1. In terms of biological role, catalyzes the reversible adenylation of nicotinate mononucleotide (NaMN) to nicotinic acid adenine dinucleotide (NaAD). The polypeptide is Probable nicotinate-nucleotide adenylyltransferase (Methylorubrum extorquens (strain CM4 / NCIMB 13688) (Methylobacterium extorquens)).